The sequence spans 328 residues: Nickel import system permease protein NikB (328 aa).

Transmembrane regions (helical) follow at residues 11–31 (LMQM…LMKL), 104–124 (LLIS…LGII), 139–159 (VIST…LLFI), 170–190 (ILSQ…AYII), 229–249 (ILPI…GTVV), and 279–299 (VLFI…LTLL). The ABC transmembrane type-1 domain maps to 100–297 (APITLLISFS…IINTIADLLT (198 aa)).

It belongs to the binding-protein-dependent transport system permease family. OppBC subfamily. As to quaternary structure, the complex is composed of two ATP-binding proteins (NikD and NikE), two transmembrane proteins (NikB and NikC) and a solute-binding protein (NikA).

It is found in the cell membrane. Functionally, part of the ABC transporter complex NikABCDE (Opp2) involved in nickel import. Probably responsible for the translocation of the substrate across the membrane. This is Nickel import system permease protein NikB from Staphylococcus aureus (strain Mu50 / ATCC 700699).